Consider the following 95-residue polypeptide: MRHYEVMVILDPSLDERTVGPSLENMLGVVKTEGGKIDKVDIWGRRRLAYEIRKQAEGIYAVIDLTASPATVNELDRQLGLNESVLRTKVLRHDK.

The protein belongs to the bacterial ribosomal protein bS6 family.

Functionally, binds together with bS18 to 16S ribosomal RNA. The sequence is that of Small ribosomal subunit protein bS6 from Nocardia farcinica (strain IFM 10152).